A 397-amino-acid polypeptide reads, in one-letter code: Acetate kinase (397 aa).

N7 contributes to the Mg(2+) binding site. An ATP-binding site is contributed by K14. Residue R90 participates in substrate binding. The active-site Proton donor/acceptor is D147. Residues H207–G211, D282–R284, and G330–N334 each bind ATP. Mg(2+) is bound at residue E383.

This sequence belongs to the acetokinase family. In terms of assembly, homodimer. The cofactor is Mg(2+). Mn(2+) is required as a cofactor.

Its subcellular location is the cytoplasm. It catalyses the reaction acetate + ATP = acetyl phosphate + ADP. It functions in the pathway metabolic intermediate biosynthesis; acetyl-CoA biosynthesis; acetyl-CoA from acetate: step 1/2. In terms of biological role, catalyzes the formation of acetyl phosphate from acetate and ATP. Can also catalyze the reverse reaction. This chain is Acetate kinase, found in Clostridium botulinum (strain Loch Maree / Type A3).